Consider the following 181-residue polypeptide: 6,7-dimethyl-8-ribityllumazine synthase 2 (181 aa).

The segment at 1-23 (MSLPMTETVTDPAETAPPTAERS) is disordered. Residues Trp-40, 74-76 (SFE), 98-100 (LVV), and Ser-129 each bind 5-amino-6-(D-ribitylamino)uracil.

It belongs to the DMRL synthase family.

The catalysed reaction is (2S)-2-hydroxy-3-oxobutyl phosphate + 5-amino-6-(D-ribitylamino)uracil = 6,7-dimethyl-8-(1-D-ribityl)lumazine + phosphate + 2 H2O + H(+). It participates in cofactor biosynthesis; riboflavin biosynthesis; riboflavin from 2-hydroxy-3-oxobutyl phosphate and 5-amino-6-(D-ribitylamino)uracil: step 1/2. Functionally, catalyzes the formation of 6,7-dimethyl-8-ribityllumazine by condensation of 5-amino-6-(D-ribitylamino)uracil with 3,4-dihydroxy-2-butanone 4-phosphate. This is the penultimate step in the biosynthesis of riboflavin. The protein is 6,7-dimethyl-8-ribityllumazine synthase 2 of Rhodopseudomonas palustris (strain ATCC BAA-98 / CGA009).